Consider the following 535-residue polypeptide: Hrp65 protein (535 aa).

The tract at residues Met-1–Asn-80 is disordered. Composition is skewed to low complexity over residues Glu-27 to Asn-42 and Asn-50 to Arg-64. Over residues Gly-65–Pro-74 the composition is skewed to gly residues. 2 consecutive RRM domains span residues Asn-113–Asn-185 and Thr-187–His-268. Disordered regions lie at residues Glu-346 to Gln-411 and Gln-429 to Tyr-535. A compositionally biased stretch (gly residues) spans Gln-434–Arg-459. A compositionally biased stretch (low complexity) spans Gly-486–Gly-502. Basic and acidic residues predominate over residues Asp-521 to Tyr-535.

The protein resides in the cytoplasm. The protein localises to the cytoskeleton. It is found in the nucleus. In terms of biological role, component of nuclear connecting fibers associated with the transport of ribonucleoprotein particles from either the chromosome to the nuclear pore complex or their transient retention in the nucleoplasm. This is Hrp65 protein (HRP65) from Chironomus tentans (Midge).